We begin with the raw amino-acid sequence, 323 residues long: MKPSVILYKTLPDDLLQRLEEHFSVTQVKNLRPETVSQHAEAFAQAEGLLGSSEKVDAALLEKMPKLRATSTVSVGYDNFDVEALNARRVLLMHTPTVLTETVADTVMALVLSTARRVVEVAERVKAGEWTKSIGPDWFGTDVHHKTLGIVGMGRIGMALAQRAHFGFGMPILYNARRQHPQAEERFNARYCDLDTLLQEADFVCLILPLSEETHHLFGQAQFAKMKSSAIFINAGRGPVVDEQALIAALQNGEIHAAGLDVFEHEPLAKDSPLLSLPNVVALPHIGSATHETRYNMAACAVDNLIDALNGNVEKNCVNPQVK.

Active-site residues include Arg-237 and Glu-266. His-285 serves as the catalytic Proton donor.

It belongs to the D-isomer specific 2-hydroxyacid dehydrogenase family. GhrB subfamily. Homodimer.

The protein localises to the cytoplasm. It carries out the reaction glycolate + NADP(+) = glyoxylate + NADPH + H(+). The catalysed reaction is (R)-glycerate + NAD(+) = 3-hydroxypyruvate + NADH + H(+). It catalyses the reaction (R)-glycerate + NADP(+) = 3-hydroxypyruvate + NADPH + H(+). In terms of biological role, catalyzes the NADPH-dependent reduction of glyoxylate and hydroxypyruvate into glycolate and glycerate, respectively. The chain is Glyoxylate/hydroxypyruvate reductase B from Klebsiella pneumoniae subsp. pneumoniae (strain ATCC 700721 / MGH 78578).